The chain runs to 562 residues: Membrane protein insertase YidC (562 aa).

The chain crosses the membrane as a helical span at residues 1–21 (MDIKRTILIVALAIVTYVGVL). The tract at residues 42–74 (TAPGIPDTAAGNNGSASADVPSATGNTTSAAPL) is disordered. 5 helical membrane passes run 343–363 (LELT…FWLL), 369–389 (ILGN…GLFF), 439–459 (LGGC…YWVL), 470–490 (WILW…PIIM), and 517–537 (PIIF…YWVV).

It belongs to the OXA1/ALB3/YidC family. Type 1 subfamily. As to quaternary structure, interacts with the Sec translocase complex via SecD. Specifically interacts with transmembrane segments of nascent integral membrane proteins during membrane integration.

The protein resides in the cell inner membrane. Required for the insertion and/or proper folding and/or complex formation of integral membrane proteins into the membrane. Involved in integration of membrane proteins that insert both dependently and independently of the Sec translocase complex, as well as at least some lipoproteins. Aids folding of multispanning membrane proteins. The chain is Membrane protein insertase YidC from Pseudomonas syringae pv. tomato (strain ATCC BAA-871 / DC3000).